The chain runs to 439 residues: Protein translocase subunit SecY (439 aa).

A run of 10 helical transmembrane segments spans residues 28 to 48, 73 to 93, 127 to 147, 156 to 176, 179 to 199, 220 to 240, 276 to 296, 318 to 338, 375 to 395, and 401 to 421; these read ILIT…PVPG, IFSG…LPYI, LTRY…AVWV, PLFT…VMWI, LITE…NIVA, VGGI…IVFV, GVMP…LANF, IYAL…SSLI, LTIL…AVEG, and TFQG…IDTA.

It belongs to the SecY/SEC61-alpha family. As to quaternary structure, component of the Sec protein translocase complex. Heterotrimer consisting of SecY, SecE and SecG subunits. The heterotrimers can form oligomers, although 1 heterotrimer is thought to be able to translocate proteins. Interacts with the ribosome. Interacts with SecDF, and other proteins may be involved. Interacts with SecA.

Its subcellular location is the cell inner membrane. It localises to the cellular thylakoid membrane. Its function is as follows. The central subunit of the protein translocation channel SecYEG. Consists of two halves formed by TMs 1-5 and 6-10. These two domains form a lateral gate at the front which open onto the bilayer between TMs 2 and 7, and are clamped together by SecE at the back. The channel is closed by both a pore ring composed of hydrophobic SecY resides and a short helix (helix 2A) on the extracellular side of the membrane which forms a plug. The plug probably moves laterally to allow the channel to open. The ring and the pore may move independently. The sequence is that of Protein translocase subunit SecY from Synechococcus elongatus (strain ATCC 33912 / PCC 7942 / FACHB-805) (Anacystis nidulans R2).